A 440-amino-acid chain; its full sequence is Proline--tRNA ligase (440 aa).

This sequence belongs to the class-II aminoacyl-tRNA synthetase family. ProS type 2 subfamily. Homodimer.

Its subcellular location is the cytoplasm. It carries out the reaction tRNA(Pro) + L-proline + ATP = L-prolyl-tRNA(Pro) + AMP + diphosphate. Functionally, catalyzes the attachment of proline to tRNA(Pro) in a two-step reaction: proline is first activated by ATP to form Pro-AMP and then transferred to the acceptor end of tRNA(Pro). The polypeptide is Proline--tRNA ligase (Rhizobium leguminosarum bv. trifolii (strain WSM2304)).